Reading from the N-terminus, the 202-residue chain is dITP/XTP pyrophosphatase (202 aa).

7 to 12 is a binding site for substrate; it reads TTNEGK. Glu-37 and Asp-66 together coordinate Mg(2+). Catalysis depends on Asp-66, which acts as the Proton acceptor. Residues Ser-67, 155–158, Lys-178, and 183–184 each bind substrate; these read FGYD and HR.

The protein belongs to the HAM1 NTPase family. In terms of assembly, homodimer. Mg(2+) is required as a cofactor.

It catalyses the reaction XTP + H2O = XMP + diphosphate + H(+). It carries out the reaction dITP + H2O = dIMP + diphosphate + H(+). The enzyme catalyses ITP + H2O = IMP + diphosphate + H(+). In terms of biological role, pyrophosphatase that catalyzes the hydrolysis of nucleoside triphosphates to their monophosphate derivatives, with a high preference for the non-canonical purine nucleotides XTP (xanthosine triphosphate), dITP (deoxyinosine triphosphate) and ITP. Seems to function as a house-cleaning enzyme that removes non-canonical purine nucleotides from the nucleotide pool, thus preventing their incorporation into DNA/RNA and avoiding chromosomal lesions. In Aquifex aeolicus (strain VF5), this protein is dITP/XTP pyrophosphatase.